The sequence spans 503 residues: Aromatase (503 aa).

The chain crosses the membrane as a helical span at residues 21–41 (VTVSAMPLLLIMGLLLLIWNC). Substrate is bound by residues aspartate 309 and methionine 374. Cysteine 437 provides a ligand contact to heme.

Belongs to the cytochrome P450 family. Requires heme as cofactor.

It localises to the endoplasmic reticulum membrane. The protein localises to the microsome membrane. The catalysed reaction is testosterone + 3 reduced [NADPH--hemoprotein reductase] + 3 O2 = 17beta-estradiol + formate + 3 oxidized [NADPH--hemoprotein reductase] + 4 H2O + 4 H(+). It catalyses the reaction androst-4-ene-3,17-dione + 3 reduced [NADPH--hemoprotein reductase] + 3 O2 = estrone + formate + 3 oxidized [NADPH--hemoprotein reductase] + 4 H2O + 4 H(+). It carries out the reaction androst-4-ene-3,17-dione + reduced [NADPH--hemoprotein reductase] + O2 = 19-hydroxyandrost-4-ene-3,17-dione + oxidized [NADPH--hemoprotein reductase] + H2O + H(+). The enzyme catalyses 19-hydroxyandrost-4-ene-3,17-dione + reduced [NADPH--hemoprotein reductase] + O2 = 19-oxo-androst-4-ene-3,17-dione + oxidized [NADPH--hemoprotein reductase] + 2 H2O + H(+). The catalysed reaction is 19-oxo-androst-4-ene-3,17-dione + reduced [NADPH--hemoprotein reductase] + O2 = estrone + formate + oxidized [NADPH--hemoprotein reductase] + H2O + 2 H(+). It catalyses the reaction estrone + reduced [NADPH--hemoprotein reductase] + O2 = 2-hydroxyestrone + oxidized [NADPH--hemoprotein reductase] + H2O + H(+). It carries out the reaction 17beta-hydroxy-5alpha-androstan-3-one + reduced [NADPH--hemoprotein reductase] + O2 = 17beta,19-dihydroxy-3-oxo-5alpha-androstanone + oxidized [NADPH--hemoprotein reductase] + H2O + H(+). The enzyme catalyses 17beta,19-dihydroxy-3-oxo-5alpha-androstanone + reduced [NADPH--hemoprotein reductase] + O2 = 17beta-hydroxy-3,19-dioxo-5alpha-androstanone + oxidized [NADPH--hemoprotein reductase] + 2 H2O + H(+). The catalysed reaction is 17beta-hydroxy-3,19-dioxo-5alpha-androstanone + reduced [NADPH--hemoprotein reductase] + O2 = 17beta-hydroxy-3-oxo-19-nor-5alpha-androst-1-ene + formate + oxidized [NADPH--hemoprotein reductase] + H2O + 2 H(+). It participates in steroid hormone biosynthesis. Functionally, a cytochrome P450 monooxygenase that catalyzes the conversion of C19 androgens, androst-4-ene-3,17-dione (androstenedione) and testosterone to the C18 estrogens, estrone and estradiol, respectively. Catalyzes three successive oxidations of C19 androgens: two conventional oxidations at C19 yielding 19-hydroxy and 19-oxo/19-aldehyde derivatives, followed by a third oxidative aromatization step that involves C1-beta hydrogen abstraction combined with cleavage of the C10-C19 bond to yield a phenolic A ring and formic acid. Alternatively, the third oxidative reaction yields a 19-norsteroid and formic acid. Converts dihydrotestosterone to delta1,10-dehydro 19-nordihydrotestosterone and may play a role in homeostasis of this potent androgen. Also displays 2-hydroxylase activity toward estrone. Mechanistically, uses molecular oxygen inserting one oxygen atom into a substrate, and reducing the second into a water molecule, with two electrons provided by NADPH via cytochrome P450 reductase (CPR; NADPH-ferrihemoprotein reductase). In Mus musculus (Mouse), this protein is Aromatase (Cyp19a1).